The primary structure comprises 694 residues: Polyribonucleotide nucleotidyltransferase (694 aa).

Mg(2+) is bound by residues D485 and D491. A KH domain is found at 552–611; it reads PRIETMQIKPNKIATVIGPGGKQIRQIIEEAGVQIDINDSGLVSISASSPQAIEKAKSII. The 69-residue stretch at 621 to 689 folds into the S1 motif domain; sequence GKIYEGRVTS…EKGQYKLSHK (69 aa).

This sequence belongs to the polyribonucleotide nucleotidyltransferase family. Requires Mg(2+) as cofactor.

Its subcellular location is the cytoplasm. It carries out the reaction RNA(n+1) + phosphate = RNA(n) + a ribonucleoside 5'-diphosphate. Involved in mRNA degradation. Catalyzes the phosphorolysis of single-stranded polyribonucleotides processively in the 3'- to 5'-direction. In Chlamydia felis (strain Fe/C-56) (Chlamydophila felis), this protein is Polyribonucleotide nucleotidyltransferase.